The primary structure comprises 264 residues: tRNA pseudouridine synthase A (264 aa).

Asp-51 acts as the Nucleophile in catalysis. Residue Tyr-109 participates in substrate binding.

It belongs to the tRNA pseudouridine synthase TruA family. As to quaternary structure, homodimer.

It carries out the reaction uridine(38/39/40) in tRNA = pseudouridine(38/39/40) in tRNA. In terms of biological role, formation of pseudouridine at positions 38, 39 and 40 in the anticodon stem and loop of transfer RNAs. The sequence is that of tRNA pseudouridine synthase A from Vibrio campbellii (strain ATCC BAA-1116).